We begin with the raw amino-acid sequence, 494 residues long: Aspartyl/glutamyl-tRNA(Asn/Gln) amidotransferase subunit B (494 aa).

Residues 475 to 494 (TSGRADPKATNQMLAKKLKG) form a disordered region.

The protein belongs to the GatB/GatE family. GatB subfamily. Heterotrimer of A, B and C subunits.

It carries out the reaction L-glutamyl-tRNA(Gln) + L-glutamine + ATP + H2O = L-glutaminyl-tRNA(Gln) + L-glutamate + ADP + phosphate + H(+). It catalyses the reaction L-aspartyl-tRNA(Asn) + L-glutamine + ATP + H2O = L-asparaginyl-tRNA(Asn) + L-glutamate + ADP + phosphate + 2 H(+). Its function is as follows. Allows the formation of correctly charged Asn-tRNA(Asn) or Gln-tRNA(Gln) through the transamidation of misacylated Asp-tRNA(Asn) or Glu-tRNA(Gln) in organisms which lack either or both of asparaginyl-tRNA or glutaminyl-tRNA synthetases. The reaction takes place in the presence of glutamine and ATP through an activated phospho-Asp-tRNA(Asn) or phospho-Glu-tRNA(Gln). In Acaryochloris marina (strain MBIC 11017), this protein is Aspartyl/glutamyl-tRNA(Asn/Gln) amidotransferase subunit B.